A 292-amino-acid polypeptide reads, in one-letter code: Putative sugar lactone lactonase YvrE (292 aa).

A divalent metal cation-binding residues include glutamate 15, asparagine 146, and aspartate 196.

This sequence belongs to the SMP-30/CGR1 family. A divalent metal cation is required as a cofactor.

Its subcellular location is the cytoplasm. In Bacillus subtilis (strain 168), this protein is Putative sugar lactone lactonase YvrE (yvrE).